The following is a 206-amino-acid chain: LOB domain-containing protein 2 (206 aa).

The disordered stretch occupies residues methionine 1–serine 20. The LOB domain occupies glutamine 23–isoleucine 123.

It belongs to the LOB domain-containing protein family.

This chain is LOB domain-containing protein 2 (LBD2), found in Arabidopsis thaliana (Mouse-ear cress).